Consider the following 403-residue polypeptide: Argininosuccinate synthase (403 aa).

Ala-10 to Ser-18 lines the ATP pocket. Tyr-87 is an L-citrulline binding site. Gly-117 contacts ATP. L-aspartate-binding residues include Thr-119, Asn-123, and Asp-124. Asn-123 contributes to the L-citrulline binding site. L-citrulline contacts are provided by Arg-127, Ser-175, Ser-184, Glu-260, and Tyr-272.

The protein belongs to the argininosuccinate synthase family. Type 1 subfamily. In terms of assembly, homotetramer.

The protein localises to the cytoplasm. It catalyses the reaction L-citrulline + L-aspartate + ATP = 2-(N(omega)-L-arginino)succinate + AMP + diphosphate + H(+). The protein operates within amino-acid biosynthesis; L-arginine biosynthesis; L-arginine from L-ornithine and carbamoyl phosphate: step 2/3. This chain is Argininosuccinate synthase, found in Bacillus pumilus (strain SAFR-032).